Reading from the N-terminus, the 79-residue chain is Neurotoxin ShK-like1 (79 aa).

The N-terminal stretch at 1–25 (MSRKLLAVLMVCTFFLIAASMGTNA) is a signal peptide. Residues 26–35 (LPFHEGIERR) constitute a propeptide that is removed on maturation. In terms of domain architecture, ShKT spans 39-78 (CVDKMPFVCMRKDIPAICKNRNHRSYAFIMDVCRKTCGQC). 3 disulfides stabilise this stretch: C39–C78, C47–C71, and C56–C75.

As to expression, expressed in nematocytes (in planulae and primary polyps). Is localized predominantly in the body column nematocytes and not in the tentacles (in primary polyps).

It is found in the nematocyst. The protein resides in the secreted. In terms of biological role, neurotoxin. In vivo, induces contraction paralysis followed by death (within 2 hours) on zebrafish larvae. Also induces body contraction in Nematostella 11-dpf polyps. This Nematostella vectensis (Starlet sea anemone) protein is Neurotoxin ShK-like1.